The chain runs to 244 residues: rRNA adenine N-6-methyltransferase (244 aa).

Positions 11, 13, 38, 59, 84, and 101 each coordinate S-adenosyl-L-methionine.

The protein belongs to the class I-like SAM-binding methyltransferase superfamily. rRNA adenine N(6)-methyltransferase family.

Involved in erythromycin resistance. The polypeptide is rRNA adenine N-6-methyltransferase (ermG) (Lysinibacillus sphaericus (Bacillus sphaericus)).